The following is an 89-amino-acid chain: MVLDPTQKKSVIDAHAKHEGDTGSPEVQVALLTARIEDLTGHFKEHKKDFHSRTGLLKLVGRRRNILNYLKKTDVQRYRALIEKLGLRK.

The span at 1 to 21 (MVLDPTQKKSVIDAHAKHEGD) shows a compositional bias: basic and acidic residues. The tract at residues 1–24 (MVLDPTQKKSVIDAHAKHEGDTGS) is disordered.

The protein belongs to the universal ribosomal protein uS15 family. As to quaternary structure, part of the 30S ribosomal subunit. Forms a bridge to the 50S subunit in the 70S ribosome, contacting the 23S rRNA.

Its function is as follows. One of the primary rRNA binding proteins, it binds directly to 16S rRNA where it helps nucleate assembly of the platform of the 30S subunit by binding and bridging several RNA helices of the 16S rRNA. Functionally, forms an intersubunit bridge (bridge B4) with the 23S rRNA of the 50S subunit in the ribosome. The chain is Small ribosomal subunit protein uS15 from Desulfovibrio desulfuricans (strain ATCC 27774 / DSM 6949 / MB).